Reading from the N-terminus, the 264-residue chain is Myozenin-2 (264 aa).

Arg53 bears the Omega-N-methylarginine mark. Positions Gly90–Pro135 are disordered. Residue Ser101 is modified to Phosphoserine. The span at Leu106–Pro120 shows a compositional bias: pro residues. 2 positions are modified to phosphothreonine: Thr107 and Thr111. Ser116 is modified (phosphoserine).

The protein belongs to the myozenin family. Interacts via its C-terminus with spectrin repeats 3 and 4 of ACTN2. Interacts with ACTN1, LDB3, MYOT and PPP3CA.

The protein resides in the cytoplasm. It localises to the myofibril. Its subcellular location is the sarcomere. It is found in the z line. Functionally, myozenins may serve as intracellular binding proteins involved in linking Z line proteins such as alpha-actinin, gamma-filamin, TCAP/telethonin, LDB3/ZASP and localizing calcineurin signaling to the sarcomere. Plays an important role in the modulation of calcineurin signaling. May play a role in myofibrillogenesis. This Pongo abelii (Sumatran orangutan) protein is Myozenin-2 (MYOZ2).